The sequence spans 185 residues: Crossover junction endodeoxyribonuclease RuvC (185 aa).

Residues Asp7, Glu66, and Asp137 contribute to the active site. Mg(2+) is bound by residues Asp7, Glu66, and Asp137.

Belongs to the RuvC family. Homodimer which binds Holliday junction (HJ) DNA. The HJ becomes 2-fold symmetrical on binding to RuvC with unstacked arms; it has a different conformation from HJ DNA in complex with RuvA. In the full resolvosome a probable DNA-RuvA(4)-RuvB(12)-RuvC(2) complex forms which resolves the HJ. It depends on Mg(2+) as a cofactor.

The protein localises to the cytoplasm. The catalysed reaction is Endonucleolytic cleavage at a junction such as a reciprocal single-stranded crossover between two homologous DNA duplexes (Holliday junction).. Functionally, the RuvA-RuvB-RuvC complex processes Holliday junction (HJ) DNA during genetic recombination and DNA repair. Endonuclease that resolves HJ intermediates. Cleaves cruciform DNA by making single-stranded nicks across the HJ at symmetrical positions within the homologous arms, yielding a 5'-phosphate and a 3'-hydroxyl group; requires a central core of homology in the junction. The consensus cleavage sequence is 5'-(A/T)TT(C/G)-3'. Cleavage occurs on the 3'-side of the TT dinucleotide at the point of strand exchange. HJ branch migration catalyzed by RuvA-RuvB allows RuvC to scan DNA until it finds its consensus sequence, where it cleaves and resolves the cruciform DNA. This Anaeromyxobacter dehalogenans (strain 2CP-1 / ATCC BAA-258) protein is Crossover junction endodeoxyribonuclease RuvC.